A 1070-amino-acid chain; its full sequence is Carbamoyl phosphate synthase large chain (1070 aa).

Residues 1 to 401 (MPKRDDIKTI…ALLKAVRSLE (401 aa)) form a carboxyphosphate synthetic domain region. ATP-binding residues include Arg129, Arg169, Gly175, Gly176, Lys208, Ile210, Glu215, Gly241, Ile242, His243, Gln284, and Glu298. One can recognise an ATP-grasp 1 domain in the interval 133–327 (RDLMNELGEP…IAKLAAKIAV (195 aa)). Mg(2+) is bound by residues Gln284, Glu298, and Asn300. Residues Gln284, Glu298, and Asn300 each coordinate Mn(2+). Positions 402-546 (IGADHLLLEE…YSTYEDENES (145 aa)) are oligomerization domain. The interval 547-929 (IRSSKESVIV…ALYKGFVASG (383 aa)) is carbamoyl phosphate synthetic domain. Positions 671–861 (EKALEILQIP…MANVATRVIL (191 aa)) constitute an ATP-grasp 2 domain. The ATP site is built by Arg707, Arg746, Val748, Glu752, Gly777, Val778, His779, Ser780, Gln820, and Glu832. Residues Gln820, Glu832, and Asn834 each contribute to the Mg(2+) site. Mn(2+) contacts are provided by Gln820, Glu832, and Asn834. Residues 930–1070 (TTMHDYGTVL…SEVKQPKARV (141 aa)) form the MGS-like domain. The interval 930-1070 (TTMHDYGTVL…SEVKQPKARV (141 aa)) is allosteric domain.

The protein belongs to the CarB family. Composed of two chains; the small (or glutamine) chain promotes the hydrolysis of glutamine to ammonia, which is used by the large (or ammonia) chain to synthesize carbamoyl phosphate. Tetramer of heterodimers (alpha,beta)4. Mg(2+) serves as cofactor. The cofactor is Mn(2+).

The enzyme catalyses hydrogencarbonate + L-glutamine + 2 ATP + H2O = carbamoyl phosphate + L-glutamate + 2 ADP + phosphate + 2 H(+). The catalysed reaction is hydrogencarbonate + NH4(+) + 2 ATP = carbamoyl phosphate + 2 ADP + phosphate + 2 H(+). The protein operates within amino-acid biosynthesis; L-arginine biosynthesis; carbamoyl phosphate from bicarbonate: step 1/1. Its pathway is pyrimidine metabolism; UMP biosynthesis via de novo pathway; (S)-dihydroorotate from bicarbonate: step 1/3. Its function is as follows. Large subunit of the glutamine-dependent carbamoyl phosphate synthetase (CPSase). CPSase catalyzes the formation of carbamoyl phosphate from the ammonia moiety of glutamine, carbonate, and phosphate donated by ATP, constituting the first step of 2 biosynthetic pathways, one leading to arginine and/or urea and the other to pyrimidine nucleotides. The large subunit (synthetase) binds the substrates ammonia (free or transferred from glutamine from the small subunit), hydrogencarbonate and ATP and carries out an ATP-coupled ligase reaction, activating hydrogencarbonate by forming carboxy phosphate which reacts with ammonia to form carbamoyl phosphate. This chain is Carbamoyl phosphate synthase large chain, found in Listeria innocua serovar 6a (strain ATCC BAA-680 / CLIP 11262).